The sequence spans 144 residues: Large ribosomal subunit protein uL15 (144 aa).

Positions 1–45 (MNLNTLSPDPGSRPSRRRVGRGIGSGLGKTCGKGHKGQKSRAGGY) are disordered. Gly residues predominate over residues 21–31 (RGIGSGLGKTC).

It belongs to the universal ribosomal protein uL15 family. As to quaternary structure, part of the 50S ribosomal subunit.

Binds to the 23S rRNA. This chain is Large ribosomal subunit protein uL15, found in Legionella pneumophila (strain Corby).